Reading from the N-terminus, the 481-residue chain is Glutamate--tRNA ligase (481 aa).

The 'HIGH' region signature appears at 11-21 (PSPTGLLHIGN). The 'KMSKS' region signature appears at 255–259 (KLSKR). Lys258 is a binding site for ATP.

This sequence belongs to the class-I aminoacyl-tRNA synthetase family. Glutamate--tRNA ligase type 1 subfamily. As to quaternary structure, monomer.

The protein resides in the cytoplasm. It catalyses the reaction tRNA(Glu) + L-glutamate + ATP = L-glutamyl-tRNA(Glu) + AMP + diphosphate. Functionally, catalyzes the attachment of glutamate to tRNA(Glu) in a two-step reaction: glutamate is first activated by ATP to form Glu-AMP and then transferred to the acceptor end of tRNA(Glu). This Streptococcus pyogenes serotype M6 (strain ATCC BAA-946 / MGAS10394) protein is Glutamate--tRNA ligase.